Reading from the N-terminus, the 2410-residue chain is Cell wall alpha-1,3-glucan synthase ags1 (2410 aa).

Residues Ser-1643, Ser-1644, and Ser-1651 each carry the phosphoserine modification. Thr-1653 carries the phosphothreonine modification. The segment at Ser-1685 to Leu-1706 is disordered. 2 positions are modified to phosphoserine: Ser-1738 and Ser-1812. The tract at residues Gln-1796–Arg-1827 is disordered. Residues Pro-1802–Arg-1827 are compositionally biased toward low complexity.

This sequence belongs to the glycosyltransferase group 1 family. As to quaternary structure, interacts with sad1.

It catalyses the reaction [(1-&gt;3)-alpha-D-glucosyl](n) + UDP-alpha-D-glucose = [(1-&gt;3)-alpha-D-glucosyl](n+1) + UDP + H(+). Functionally, required for alpha-1,3-glucan and alpha-1,4-glucan production which are required for cell wall synthesis. The chain is Cell wall alpha-1,3-glucan synthase ags1 (ags1) from Schizosaccharomyces pombe (strain 972 / ATCC 24843) (Fission yeast).